Consider the following 266-residue polypeptide: Large ribosomal subunit protein eL8 (266 aa).

Residues 1–11 show a composition bias toward basic residues; it reads MPKGKKAKGKK. The tract at residues 1 to 21 is disordered; sequence MPKGKKAKGKKVAPAPSVAKK.

This sequence belongs to the eukaryotic ribosomal protein eL8 family. Component of the large ribosomal subunit.

The protein localises to the cytoplasm. Component of the large ribosomal subunit. The ribosome is a large ribonucleoprotein complex responsible for the synthesis of proteins in the cell. This chain is Large ribosomal subunit protein eL8 (rpl7a), found in Ictalurus punctatus (Channel catfish).